Here is a 652-residue protein sequence, read N- to C-terminus: DNA ligase (652 aa).

NAD(+)-binding positions include 29-33, 78-79, and Glu-107; these read DSEYD and SL. The active-site N6-AMP-lysine intermediate is the Lys-109. NAD(+)-binding residues include Arg-130, Glu-164, Lys-278, and Lys-302. Zn(2+) contacts are provided by Cys-395, Cys-398, Cys-413, and Cys-418. Residues 577 to 652 form the BRCT domain; that stretch reads VADAALSGLT…VRDEAWLESL (76 aa).

It belongs to the NAD-dependent DNA ligase family. LigA subfamily. Requires Mg(2+) as cofactor. The cofactor is Mn(2+).

It carries out the reaction NAD(+) + (deoxyribonucleotide)n-3'-hydroxyl + 5'-phospho-(deoxyribonucleotide)m = (deoxyribonucleotide)n+m + AMP + beta-nicotinamide D-nucleotide.. Its function is as follows. DNA ligase that catalyzes the formation of phosphodiester linkages between 5'-phosphoryl and 3'-hydroxyl groups in double-stranded DNA using NAD as a coenzyme and as the energy source for the reaction. It is essential for DNA replication and repair of damaged DNA. This Streptococcus pneumoniae (strain Hungary19A-6) protein is DNA ligase.